The following is a 130-amino-acid chain: Small ribosomal subunit protein uS9 (130 aa).

It belongs to the universal ribosomal protein uS9 family.

The chain is Small ribosomal subunit protein uS9 from Exiguobacterium sp. (strain ATCC BAA-1283 / AT1b).